Reading from the N-terminus, the 589-residue chain is Ectoderm-neural cortex protein 1 (589 aa).

The BTB domain maps to 46–114 (TDVLLHAGNR…AYSSRVIINE (69 aa)). Kelch repeat units follow at residues 296 to 340 (ALFL…AIGC), 341 to 388 (KVYI…ELKH), 389 to 444 (CLYV…SAKL), 446 to 492 (LFAF…VLGN), 494 to 538 (IFIM…ASGN), and 539 to 585 (KLYV…STWK).

In terms of assembly, binds to RB1. Hypophosphorylated RB1 associates with ENC1 during neuronal differentiation, while hyperphosphorylated RB1 associates with ENC1 in undifferentiating cells. Part of a complex that contains CUL3, RBX1 and ENC1. Interacts indirectly with KEAP1. Ubiquitinated by E3 ubiquitin ligase complex formed by CUL3 and RBX1 and probably targeted for proteasome-independent degradation. Quinone-induced oxidative stress increases its ubiquitination. As to expression, primarily expressed in the nervous system.

It is found in the nucleus matrix. It localises to the cytoplasm. Its subcellular location is the cytoskeleton. Functionally, actin-binding protein involved in the regulation of neuronal process formation and in differentiation of neural crest cells. Down-regulates transcription factor NF2L2/NRF2 by decreasing the rate of protein synthesis and not via a ubiquitin-mediated proteasomal degradation mechanism. This chain is Ectoderm-neural cortex protein 1 (Enc1), found in Mus musculus (Mouse).